The following is a 38-amino-acid chain: Photosystem II reaction center protein L (38 aa).

A helical membrane pass occupies residues 17–37 (GLYWGLLLIFVLAVLFSSYFF).

It belongs to the PsbL family. In terms of assembly, PSII is composed of 1 copy each of membrane proteins PsbA, PsbB, PsbC, PsbD, PsbE, PsbF, PsbH, PsbI, PsbJ, PsbK, PsbL, PsbM, PsbT, PsbX, PsbY, PsbZ, Psb30/Ycf12, at least 3 peripheral proteins of the oxygen-evolving complex and a large number of cofactors. It forms dimeric complexes.

It is found in the plastid. The protein localises to the chloroplast thylakoid membrane. Its function is as follows. One of the components of the core complex of photosystem II (PSII). PSII is a light-driven water:plastoquinone oxidoreductase that uses light energy to abstract electrons from H(2)O, generating O(2) and a proton gradient subsequently used for ATP formation. It consists of a core antenna complex that captures photons, and an electron transfer chain that converts photonic excitation into a charge separation. This subunit is found at the monomer-monomer interface and is required for correct PSII assembly and/or dimerization. In Staurastrum punctulatum (Green alga), this protein is Photosystem II reaction center protein L.